The primary structure comprises 445 residues: Putative ankyrin repeat protein L797 (445 aa).

ANK repeat units follow at residues 73–102, 285–314, 315–344, and 346–375; these read FMED…DIYS, NHEH…ELVG, NLYI…DIRQ, and LDAF…IINI.

The sequence is that of Putative ankyrin repeat protein L797 from Acanthamoeba polyphaga (Amoeba).